Here is a 283-residue protein sequence, read N- to C-terminus: Protein/nucleic acid deglycase HchA (283 aa).

The Zn(2+) site is built by His-86, Glu-91, and His-123. Residue Cys-185 is the Nucleophile of the active site.

The protein belongs to the peptidase C56 family. HchA subfamily. As to quaternary structure, homodimer.

Its subcellular location is the cytoplasm. The catalysed reaction is N(omega)-(1-hydroxy-2-oxopropyl)-L-arginyl-[protein] + H2O = lactate + L-arginyl-[protein] + H(+). It catalyses the reaction N(6)-(1-hydroxy-2-oxopropyl)-L-lysyl-[protein] + H2O = lactate + L-lysyl-[protein] + H(+). The enzyme catalyses S-(1-hydroxy-2-oxopropyl)-L-cysteinyl-[protein] + H2O = lactate + L-cysteinyl-[protein] + H(+). It carries out the reaction N(omega)-(1-hydroxy-2-oxoethyl)-L-arginyl-[protein] + H2O = L-arginyl-[protein] + glycolate + H(+). The catalysed reaction is N(6)-(1-hydroxy-2-oxoethyl)-L-lysyl-[protein] + H2O = glycolate + L-lysyl-[protein] + H(+). It catalyses the reaction S-(1-hydroxy-2-oxoethyl)-L-cysteinyl-[protein] + H2O = glycolate + L-cysteinyl-[protein] + H(+). The enzyme catalyses N(2)-(1-hydroxy-2-oxopropyl)-dGTP + H2O = lactate + dGTP + H(+). It carries out the reaction N(2)-(1-hydroxy-2-oxopropyl)-GTP + H2O = lactate + GTP + H(+). The catalysed reaction is N(2)-(1-hydroxy-2-oxopropyl)-GDP + H2O = lactate + GDP + H(+). It catalyses the reaction N(2)-(1-hydroxy-2-oxopropyl)-GMP + H2O = lactate + GMP + H(+). The enzyme catalyses N(2)-(1-hydroxy-2-oxoethyl)-dGTP + H2O = dGTP + glycolate + H(+). It carries out the reaction N(2)-(1-hydroxy-2-oxoethyl)-GTP + H2O = glycolate + GTP + H(+). The catalysed reaction is N(2)-(1-hydroxy-2-oxoethyl)-GDP + H2O = glycolate + GDP + H(+). It catalyses the reaction N(2)-(1-hydroxy-2-oxoethyl)-GMP + H2O = glycolate + GMP + H(+). The enzyme catalyses an N(2)-(1-hydroxy-2-oxopropyl)-guanosine in RNA + H2O = a guanosine in RNA + lactate + H(+). It carries out the reaction an N(2)-(1-hydroxy-2-oxopropyl)-2'-deoxyguanosine in DNA + H2O = a 2'-deoxyguanosine in DNA + lactate + H(+). The catalysed reaction is an N(2)-(1-hydroxy-2-oxoethyl)-guanosine in RNA + H2O = a guanosine in RNA + glycolate + H(+). It catalyses the reaction an N(2)-(1-hydroxy-2-oxoethyl)-2'-deoxyguanosine in DNA + H2O = a 2'-deoxyguanosine in DNA + glycolate + H(+). Its function is as follows. Protein and nucleotide deglycase that catalyzes the deglycation of the Maillard adducts formed between amino groups of proteins or nucleotides and reactive carbonyl groups of glyoxals. Thus, functions as a protein deglycase that repairs methylglyoxal- and glyoxal-glycated proteins, and releases repaired proteins and lactate or glycolate, respectively. Deglycates cysteine, arginine and lysine residues in proteins, and thus reactivates these proteins by reversing glycation by glyoxals. Acts on early glycation intermediates (hemithioacetals and aminocarbinols), preventing the formation of Schiff bases and advanced glycation endproducts (AGE). Also functions as a nucleotide deglycase able to repair glycated guanine in the free nucleotide pool (GTP, GDP, GMP, dGTP) and in DNA and RNA. Is thus involved in a major nucleotide repair system named guanine glycation repair (GG repair), dedicated to reversing methylglyoxal and glyoxal damage via nucleotide sanitization and direct nucleic acid repair. Plays an important role in protecting cells from carbonyl stress. The polypeptide is Protein/nucleic acid deglycase HchA (Escherichia coli (strain K12 / MC4100 / BW2952)).